Consider the following 284-residue polypeptide: Homeobox-leucine zipper protein HAT4 (284 aa).

Polar residues predominate over residues 48–59; it reads ESFTSSVPNSDS. The tract at residues 48–132 is disordered; the sequence is ESFTSSVPNS…DGDNSRKKLR (85 aa). Positions 89-100 are enriched in low complexity; it reads VSSPNSTVSSST. Positions 126 to 185 form a DNA-binding region, homeobox; that stretch reads NSRKKLRLSKDQSAILEETFKDHSTLNPKQKQALAKQLGLRARQVEVWFQNRRARTKLKQ. A leucine-zipper region spans residues 193–214; sequence LRRCCENLTEENRRLQKEVTEL.

It belongs to the HD-ZIP homeobox family. Class II subfamily. Interacts with DNA as homodimer. In terms of tissue distribution, predominantly expressed in leaves and stems.

It localises to the nucleus. Probable transcription factor involved in the negative regulation of cell elongation and specific cell proliferation processes such as lateral root formation and secondary growth of the vascular system. Acts as a mediator of the red/far-red light effects on leaf cell expansion in the shading response. Binds to the DNA sequence 5'-CAAT[GC]ATTG-3'. Negatively regulates its own expression. This is Homeobox-leucine zipper protein HAT4 (HAT4) from Arabidopsis thaliana (Mouse-ear cress).